The chain runs to 700 residues: Hedgehog-interacting protein (700 aa).

An N-terminal signal peptide occupies residues 1-17 (MLKMLSFKLLLLAVALG). An N-linked (GlcNAc...) asparagine glycan is attached at asparagine 99. 10 disulfides stabilise this stretch: cysteine 216–cysteine 536, cysteine 218–cysteine 543, cysteine 402–cysteine 624, cysteine 435–cysteine 452, cysteine 500–cysteine 594, cysteine 612–cysteine 623, cysteine 625–cysteine 634, cysteine 639–cysteine 649, cysteine 643–cysteine 655, and cysteine 657–cysteine 666. An interaction with SHH zinc binding site region spans residues 376–388 (LDDMEEMDGLSDF). A Zn(2+)-binding site is contributed by aspartate 383. N-linked (GlcNAc...) asparagine glycans are attached at residues asparagine 416, asparagine 447, and asparagine 459. EGF-like domains lie at 607–634 (DCSRLCRNGYYTPTGKCCCSPGWEGDFC) and 635–667 (RIAKCEPACRHGGVCVRPNKCLCKKGYLGPQCE).

It belongs to the HHIP family. Interacts with all three hedgehog family members, SHH, IHH and DHH. In the adult brain, high expression found in the ventral cochlear nucleus, medial habenula, indusium griseum and tenia tecta. Some expression also in the caudate putamen, the nucleus accumbens, the ventral pallidum and in the superficial layers of the superior colliculus.

The protein localises to the cell membrane. The protein resides in the secreted. Modulates hedgehog signaling in several cell types, including brain and lung through direct interaction with members of the hedgehog family. Soluble forms inhibit Shh-induced differentiation in the fibroblast cell line C3H/10T1/2. This Mus musculus (Mouse) protein is Hedgehog-interacting protein (Hhip).